Here is a 640-residue protein sequence, read N- to C-terminus: Zinc finger protein 549 (640 aa).

The KRAB domain maps to 27–140; that stretch reads VTFEDIAVYF…PYTSVASGKW (114 aa). Residues 217–241 form a C2H2-type 1; degenerate zinc finger; the sequence is FQQRRYKCEQVFNEKVHVTEHQRVH. A Glycyl lysine isopeptide (Lys-Gly) (interchain with G-Cter in SUMO2) cross-link involves residue Lys223. Residues 247–269 form a C2H2-type 2; degenerate zinc finger; sequence YKRREYGKSLNSKYLFVEHQRTH. 13 C2H2-type zinc fingers span residues 275–298, 304–326, 332–355, 361–383, 389–411, 417–439, 445–467, 473–495, 501–523, 529–551, 557–579, 585–607, and 613–635; these read YVCNICGKSFLHKQTLVGHQQRIH, YVCIECGKSLSSKYSLVEHQRTH, YVCNVCGKSFRHKQTFVGHQQRIH, YVCMECGKSFIHSYDRIRHQRVH, YQCSECGKSFIYKQSLLDHHRIH, YECKECGKAFIHKKRLLEHQRIH, YVCIICGKSFIRSSDYMRHQRIH, YECSDCGKAFISKQTLLKHHKIH, YECSECGKGFYLEVKLLQHQRIH, CECNECGKVFSHQKRLLEHQKVH, CECSECGKCFRHRTSLIQHQKVH, YNCTACEKAFIYKNKLVEHQRIH, and YECGKCGKAFNKRYSLVRHQKVH.

Belongs to the krueppel C2H2-type zinc-finger protein family.

It is found in the nucleus. Its function is as follows. May be involved in transcriptional regulation. The polypeptide is Zinc finger protein 549 (ZNF549) (Homo sapiens (Human)).